We begin with the raw amino-acid sequence, 151 residues long: Abdominal ganglion neuropeptide L11 (151 aa).

Positions 1 to 25 (MPCTPNSHRLLLVTALCLLITSLFA) are cleaved as a signal peptide.

Its subcellular location is the secreted. This is Abdominal ganglion neuropeptide L11 from Aplysia californica (California sea hare).